The chain runs to 575 residues: Serine/threonine-protein phosphatase 2A regulatory subunit B'' subunit beta (575 aa).

Residues 41-131 form a disordered region; the sequence is APGRDQPTPG…SQSIPTFYFP (91 aa). An EF-hand domain is found at 388–423; that stretch reads KTPTSIEYWFRCMDLDGDGALSMFELEYFYEEQCRR. The Ca(2+) site is built by aspartate 401, aspartate 403, aspartate 405, and glutamate 412.

In terms of assembly, PP2A consists of a common heterodimeric core enzyme, composed of a 36 kDa catalytic subunit (subunit C) and a 65 kDa constant regulatory subunit (PR65 or subunit A), that associates with a variety of regulatory subunits. Proteins that associate with the core dimer include three families of regulatory subunits B (the R2/B/PR55/B55, R3/B''/PR72/PR130/PR59 and R5/B'/B56 families), the 48 kDa variable regulatory subunit, viral proteins, and cell signaling molecules. Interacts with N-terminal region of CDC6. Interacts with NOD2.

It is found in the nucleus. Its function is as follows. The B regulatory subunit might modulate substrate selectivity and catalytic activity, and might also direct the localization of the catalytic enzyme to a particular subcellular compartment. This chain is Serine/threonine-protein phosphatase 2A regulatory subunit B'' subunit beta (PPP2R3B), found in Homo sapiens (Human).